The chain runs to 57 residues: Sperm protamine P1-type (57 aa).

The tract at residues 1–57 (MARYRHNRSRSRSRHRRRRRGHRGGRYRRRRRRGRYGHRRHHRGHSRRRRKRRRSRH) is disordered.

The protein belongs to the protamine P1 family. As to expression, testis.

Its subcellular location is the nucleus. The protein localises to the chromosome. In terms of biological role, protamines substitute for histones in the chromatin of sperm during the haploid phase of spermatogenesis. They compact sperm DNA into a highly condensed, stable and inactive complex. The protein is Sperm protamine P1-type of Alligator mississippiensis (American alligator).